A 187-amino-acid polypeptide reads, in one-letter code: Structural protein ORF187 (187 aa).

Residues 65–85 form a helical membrane-spanning segment; sequence IYQPTAIAVSGVGGIIGALLA.

Its subcellular location is the host membrane. It is found in the virion. This chain is Structural protein ORF187, found in Acidianus two-tailed virus (ATV).